We begin with the raw amino-acid sequence, 149 residues long: MPSRFTKTRKHRGHVSAGKGRIGKHRKHPGGRGMAGGQHHHRINMDKYHPGYFGKVGMRYFHKQQAHFWKPVLNLDKLWTLIPEDKRDQYLKSASKETAPVIDTLAAGYGKILGKGRIPNVPVIVKARFVSKLAEEKIRAAGGVVELIA.

2 stretches are compositionally biased toward basic residues: residues 1 to 14 (MPSRFTKTRKHRGH) and 21 to 30 (RIGKHRKHPG). The interval 1-39 (MPSRFTKTRKHRGHVSAGKGRIGKHRKHPGGRGMAGGQH) is disordered. 2 consecutive short sequence motifs (nuclear localization signal) follow at residues 7 to 13 (KTRKHRG) and 24 to 30 (KHRKHPG). Lys-96 is covalently cross-linked (Glycyl lysine isopeptide (Lys-Gly) (interchain with G-Cter in ubiquitin)).

Belongs to the universal ribosomal protein uL15 family. In terms of assembly, component of the large ribosomal subunit (LSU). Mature yeast ribosomes consist of a small (40S) and a large (60S) subunit. The 40S small subunit contains 1 molecule of ribosomal RNA (18S rRNA) and 33 different proteins (encoded by 57 genes). The large 60S subunit contains 3 rRNA molecules (25S, 5.8S and 5S rRNA) and 46 different proteins (encoded by 81 genes).

It is found in the cytoplasm. Functionally, component of the ribosome, a large ribonucleoprotein complex responsible for the synthesis of proteins in the cell. The small ribosomal subunit (SSU) binds messenger RNAs (mRNAs) and translates the encoded message by selecting cognate aminoacyl-transfer RNA (tRNA) molecules. The large subunit (LSU) contains the ribosomal catalytic site termed the peptidyl transferase center (PTC), which catalyzes the formation of peptide bonds, thereby polymerizing the amino acids delivered by tRNAs into a polypeptide chain. The nascent polypeptides leave the ribosome through a tunnel in the LSU and interact with protein factors that function in enzymatic processing, targeting, and the membrane insertion of nascent chains at the exit of the ribosomal tunnel. This chain is Large ribosomal subunit protein uL15, found in Saccharomyces cerevisiae (strain ATCC 204508 / S288c) (Baker's yeast).